The sequence spans 209 residues: Large ribosomal subunit protein uL3 (209 aa).

The protein belongs to the universal ribosomal protein uL3 family. As to quaternary structure, part of the 50S ribosomal subunit. Forms a cluster with proteins L14 and L19.

In terms of biological role, one of the primary rRNA binding proteins, it binds directly near the 3'-end of the 23S rRNA, where it nucleates assembly of the 50S subunit. This chain is Large ribosomal subunit protein uL3, found in Oceanobacillus iheyensis (strain DSM 14371 / CIP 107618 / JCM 11309 / KCTC 3954 / HTE831).